Reading from the N-terminus, the 357-residue chain is Phenylalanine--tRNA ligase alpha subunit (357 aa).

E259 is a Mg(2+) binding site.

This sequence belongs to the class-II aminoacyl-tRNA synthetase family. Phe-tRNA synthetase alpha subunit type 1 subfamily. In terms of assembly, tetramer of two alpha and two beta subunits. Mg(2+) is required as a cofactor.

Its subcellular location is the cytoplasm. The catalysed reaction is tRNA(Phe) + L-phenylalanine + ATP = L-phenylalanyl-tRNA(Phe) + AMP + diphosphate + H(+). The polypeptide is Phenylalanine--tRNA ligase alpha subunit (Jannaschia sp. (strain CCS1)).